We begin with the raw amino-acid sequence, 181 residues long: Adenine phosphoribosyltransferase (181 aa).

The protein belongs to the purine/pyrimidine phosphoribosyltransferase family. As to quaternary structure, homodimer.

It localises to the cytoplasm. It carries out the reaction AMP + diphosphate = 5-phospho-alpha-D-ribose 1-diphosphate + adenine. Its pathway is purine metabolism; AMP biosynthesis via salvage pathway; AMP from adenine: step 1/1. In terms of biological role, catalyzes a salvage reaction resulting in the formation of AMP, that is energically less costly than de novo synthesis. This is Adenine phosphoribosyltransferase from Shewanella loihica (strain ATCC BAA-1088 / PV-4).